The chain runs to 68 residues: Protein SlyX homolog (68 aa).

This sequence belongs to the SlyX family.

In Brucella anthropi (strain ATCC 49188 / DSM 6882 / CCUG 24695 / JCM 21032 / LMG 3331 / NBRC 15819 / NCTC 12168 / Alc 37) (Ochrobactrum anthropi), this protein is Protein SlyX homolog.